Consider the following 414-residue polypeptide: O-methyltransferase sirM (414 aa).

Asp-270 provides a ligand contact to S-adenosyl-L-methionine. Residue His-321 is the Proton acceptor of the active site.

It belongs to the class I-like SAM-binding methyltransferase superfamily. Cation-independent O-methyltransferase family. COMT subfamily.

The protein operates within mycotoxin biosynthesis. Functionally, O-methyltransferase; part of the gene cluster that mediates the biosynthesis of sirodesmin PL, an epipolythiodioxopiperazine (ETP) characterized by a disulfide bridged cyclic dipeptide and that acts as a phytotoxin which is involved in the blackleg didease of canola. SirD catalyzes the O-prenylation of L-tyrosine (L-Tyr) in the presence of dimethylallyl diphosphate (DMAPP) to yield 4-O-dimethylallyl-L-Tyr, and therefore represents probably the first pathway-specific enzyme in the biosynthesis of sirodesmin PL. 4-O-dimethylallyl-L-Tyr, then undergoes condensation with L-Ser in a reaction catalyzed by the non-ribosomal peptide synthase sirP to form the diketopiperazine (DKP) backbone. Further bishydroxylation of the DKP performed by the cytochrome P450 monooxygenase sirC leads to the production of the intermediate phomamide. This step is essential to form the reactive thiol group required for toxicity of sirodesmin PL. The next steps of sirodesmin biosynthesis are not well understood yet, but some predictions could be made from intermediate compounds identification. Phomamide is converted into phomalizarine via oxidation, probably by sirT. Further oxidation, methylation (by sirM or sirN) and reduction steps convert phomalizarine to deacetyl sirodesmin. Finally, acetyltransferase sirH probably acetylates deacetyl sirodesmin to produce sirodesmin PL. This is O-methyltransferase sirM from Leptosphaeria maculans (Blackleg fungus).